Here is a 497-residue protein sequence, read N- to C-terminus: Putative aldehyde dehydrogenase AldA (497 aa).

Residue 213–219 (GKGSESG) participates in NAD(+) binding. Residues Glu257 and Cys291 contribute to the active site.

The protein belongs to the aldehyde dehydrogenase family.

It carries out the reaction an aldehyde + NAD(+) + H2O = a carboxylate + NADH + 2 H(+). The protein is Putative aldehyde dehydrogenase AldA (aldA) of Staphylococcus epidermidis (strain ATCC 35984 / DSM 28319 / BCRC 17069 / CCUG 31568 / BM 3577 / RP62A).